Reading from the N-terminus, the 289-residue chain is MYG1 protein TC_0665 (289 aa).

The protein belongs to the MYG1 family.

The polypeptide is MYG1 protein TC_0665 (Chlamydia muridarum (strain MoPn / Nigg)).